The primary structure comprises 427 residues: MPSIEAVGAREILDSRGNPTVEVEVVLEDGTLGRAAVPSGASTGAFEAVELRDGGDRYGGKGVTKAVEAVIGRIGPAIMELEATEQRLLDATLIDLDGTPGKSALGANALLGVSLAVAKAAAASSGLPLFRYLGGPSAHLLPVPMMNILNGGAHADTNVDIQEFMIAPIGAGTFAESLRWGAEIYQALKSVLKGRGLATGVGDEGGFAPSLPTNREALDLIAEAIDKAGFGLGDDIALALDVASTEFFADGSYTFEGSGRSAEQMIDYYADLVDSYPIVSIEDPLAEDDWAGWTSITTRLGARVQLVGDDLFVTNPERLARGIAEGAANALLVKVNQIGTLTETLDAVNLAHRSGYRCMMSHRSGETEDTTIADLAVAVDCGQIKTGAPARSERVAKYNQLLRIEEELDDAARYAGAGAFPRRTTTG.

Position 162 (glutamine 162) interacts with (2R)-2-phosphoglycerate. Glutamate 204 serves as the catalytic Proton donor. The Mg(2+) site is built by aspartate 241, glutamate 282, and aspartate 309. (2R)-2-phosphoglycerate contacts are provided by lysine 334, arginine 363, serine 364, and lysine 385. Catalysis depends on lysine 334, which acts as the Proton acceptor.

It belongs to the enolase family. Mg(2+) is required as a cofactor.

The protein localises to the cytoplasm. The protein resides in the secreted. It localises to the cell surface. It catalyses the reaction (2R)-2-phosphoglycerate = phosphoenolpyruvate + H2O. The protein operates within carbohydrate degradation; glycolysis; pyruvate from D-glyceraldehyde 3-phosphate: step 4/5. Its function is as follows. Catalyzes the reversible conversion of 2-phosphoglycerate (2-PG) into phosphoenolpyruvate (PEP). It is essential for the degradation of carbohydrates via glycolysis. In Parafrankia sp. (strain EAN1pec), this protein is Enolase.